A 432-amino-acid chain; its full sequence is Amino-acid acetyltransferase (432 aa).

The N-acetyltransferase domain occupies 286 to 425; that stretch reads EVVREASIED…ASLYNYQRNS (140 aa).

The protein belongs to the acetyltransferase family. ArgA subfamily.

The protein resides in the cytoplasm. The catalysed reaction is L-glutamate + acetyl-CoA = N-acetyl-L-glutamate + CoA + H(+). It functions in the pathway amino-acid biosynthesis; L-arginine biosynthesis; N(2)-acetyl-L-ornithine from L-glutamate: step 1/4. The chain is Amino-acid acetyltransferase from Pseudomonas putida (strain GB-1).